Consider the following 363-residue polypeptide: 5-formaminoimidazole-4-carboxamide-1-(beta)-D-ribofuranosyl 5'-monophosphate synthetase (363 aa).

Positions 29 and 96 each coordinate 5-amino-1-(5-phospho-beta-D-ribosyl)imidazole-4-carboxamide. The ATP-grasp domain occupies 118-354 (RDILRWEAER…ISREIKNAIE (237 aa)). Residues 148–210 (PEDI…TNFC) and Glu-232 each bind ATP. Asn-260 provides a ligand contact to 5-amino-1-(5-phospho-beta-D-ribosyl)imidazole-4-carboxamide. Mg(2+) contacts are provided by Gln-299 and Glu-312.

It belongs to the phosphohexose mutase family. The cofactor is Mg(2+). Mn(2+) is required as a cofactor.

The enzyme catalyses 5-amino-1-(5-phospho-beta-D-ribosyl)imidazole-4-carboxamide + formate + ATP = 5-formamido-1-(5-phospho-D-ribosyl)imidazole-4-carboxamide + ADP + phosphate. Its pathway is purine metabolism; IMP biosynthesis via de novo pathway; 5-formamido-1-(5-phospho-D-ribosyl)imidazole-4-carboxamide from 5-amino-1-(5-phospho-D-ribosyl)imidazole-4-carboxamide (formate route): step 1/1. In terms of biological role, catalyzes the ATP- and formate-dependent formylation of 5-aminoimidazole-4-carboxamide-1-beta-d-ribofuranosyl 5'-monophosphate (AICAR) to 5-formaminoimidazole-4-carboxamide-1-beta-d-ribofuranosyl 5'-monophosphate (FAICAR) in the absence of folates. In Methanosphaera stadtmanae (strain ATCC 43021 / DSM 3091 / JCM 11832 / MCB-3), this protein is 5-formaminoimidazole-4-carboxamide-1-(beta)-D-ribofuranosyl 5'-monophosphate synthetase.